We begin with the raw amino-acid sequence, 286 residues long: Probable protein S-acyltransferase 16 (286 aa).

Transmembrane regions (helical) follow at residues 11-31 (PVTV…FTFI) and 45-65 (NAAA…IAVF). The 51-residue stretch at 97–147 (RYCQKCSHFKPPRAHHCRVCKRCVLRMDHHCIWINNCVGHTNYKVFFVFVV) folds into the DHHC domain. Catalysis depends on Cys127, which acts as the S-palmitoyl cysteine intermediate. 2 helical membrane-spanning segments follow: residues 141–161 (VFFV…VLLV) and 182–202 (IYVI…VLLG).

The protein belongs to the DHHC palmitoyltransferase family.

It is found in the golgi apparatus membrane. It catalyses the reaction L-cysteinyl-[protein] + hexadecanoyl-CoA = S-hexadecanoyl-L-cysteinyl-[protein] + CoA. Palmitoyl acyltransferase. This Arabidopsis thaliana (Mouse-ear cress) protein is Probable protein S-acyltransferase 16 (PAT16).